Here is a 71-residue protein sequence, read N- to C-terminus: DNA-directed RNA polymerase subunit Rpo10 (71 aa).

The Zn(2+) site is built by Cys-6, Cys-9, Cys-52, and Cys-53.

The protein belongs to the archaeal Rpo10/eukaryotic RPB10 RNA polymerase subunit family. Part of the RNA polymerase complex. Zn(2+) is required as a cofactor.

It localises to the cytoplasm. It catalyses the reaction RNA(n) + a ribonucleoside 5'-triphosphate = RNA(n+1) + diphosphate. Functionally, DNA-dependent RNA polymerase (RNAP) catalyzes the transcription of DNA into RNA using the four ribonucleoside triphosphates as substrates. The chain is DNA-directed RNA polymerase subunit Rpo10 from Methanocella arvoryzae (strain DSM 22066 / NBRC 105507 / MRE50).